A 285-amino-acid polypeptide reads, in one-letter code: NADPH-dependent 7-cyano-7-deazaguanine reductase (285 aa).

91–93 (IES) contributes to the substrate binding site. 93 to 94 (SK) provides a ligand contact to NADPH. Catalysis depends on Cys-192, which acts as the Thioimide intermediate. Asp-199 functions as the Proton donor in the catalytic mechanism. 231 to 232 (HE) is a substrate binding site. Residue 260 to 261 (RG) coordinates NADPH.

Belongs to the GTP cyclohydrolase I family. QueF type 2 subfamily. As to quaternary structure, homodimer.

The protein resides in the cytoplasm. It carries out the reaction 7-aminomethyl-7-carbaguanine + 2 NADP(+) = 7-cyano-7-deazaguanine + 2 NADPH + 3 H(+). The protein operates within tRNA modification; tRNA-queuosine biosynthesis. In terms of biological role, catalyzes the NADPH-dependent reduction of 7-cyano-7-deazaguanine (preQ0) to 7-aminomethyl-7-deazaguanine (preQ1). The sequence is that of NADPH-dependent 7-cyano-7-deazaguanine reductase from Psychromonas ingrahamii (strain DSM 17664 / CCUG 51855 / 37).